The primary structure comprises 837 residues: Striatin-interacting protein 1 (837 aa).

Met1 is modified (N-acetylmethionine). Disordered stretches follow at residues 1 to 67 (MEPA…ESPD) and 333 to 423 (AASP…KGLP). Over residues 18 to 35 (PQPPPPPPPAAAQPPPGA) the composition is skewed to pro residues. Over residues 36 to 46 (PRAAAGLLPGG) the composition is skewed to low complexity. Positions 47–60 (KAREFNRNQRKDSE) are enriched in basic and acidic residues. 3 positions are modified to phosphoserine: Ser59, Ser335, and Ser339. Positions 356-377 (KALIKQDNLDAFNERDPYKADD) are enriched in basic and acidic residues. Over residues 378-391 (SREEEEENDDDNSL) the composition is skewed to acidic residues. Residue Ser788 is modified to Phosphoserine. The segment at 796–837 (DNCLQSVLGQRVDLPEDFQMNYDLWLEREVFSKPISWEELLQ) is required for STRIPAK core complex formation.

The protein belongs to the STRIP family. In terms of assembly, part of the core of STRIPAK complexes composed of PP2A catalytic and scaffolding subunits, the striatins (PP2A regulatory subunits), the striatin-associated proteins MOB4, STRIP1 and STRIP2, PDCD10 and members of the STE20 kinases, such as STK24 and STK26. The STRIPAK complex can be extended by adapter proteins such as SLMAP:SIKE1, CTTNBP2 or CTTNBP2NL. Interacts with CDC42BPB. Interacts with CTTNBP2NL.

The protein resides in the cytoplasm. Its function is as follows. Plays a role in the regulation of cell morphology and cytoskeletal organization. Required in the cortical actin filament dynamics and cell shape. Part of the striatin-interacting phosphatase and kinase (STRIPAK) complexes. STRIPAK complexes have critical roles in protein (de)phosphorylation and are regulators of multiple signaling pathways including Hippo, MAPK, nuclear receptor and cytoskeleton remodeling. Different types of STRIPAK complexes are involved in a variety of biological processes such as cell growth, differentiation, apoptosis, metabolism and immune regulation. The polypeptide is Striatin-interacting protein 1 (Homo sapiens (Human)).